The primary structure comprises 243 residues: HTH-type quorum sensing-dependent transcriptional regulator RpaR (243 aa).

The HTH luxR-type domain occupies 174–239 (KPIRRNRLTP…AAVAKALTLG (66 aa)). Positions 198–217 (AWEISVILCITERTVKFHLI) form a DNA-binding region, H-T-H motif.

This sequence belongs to the autoinducer-regulated transcriptional regulatory protein family.

Its function is as follows. Responds to the quorum-sensing autoinducer 4-coumaroyl-homoserine lactone to regulate expression of several genes. Represses expression of rpaI in the absence of the inducer. This Rhodopseudomonas palustris (strain ATCC BAA-98 / CGA009) protein is HTH-type quorum sensing-dependent transcriptional regulator RpaR.